Reading from the N-terminus, the 616-residue chain is MALLQISEPGMSSAPHQRRLAAGIDLGTTHSLVATVRSGQPETLADHQGRHLLPSVVHYQAQGYNVGYDARAQAADDPVNTISSVKRLMGRSLADIQARYPHLPYQLRASENGLPMIDTPAGLLNPVRVSADILKALAERAREALAGDLDGVVITVPAYFDDAQRQGTKDAARLAGLHVLRLLNEPTAAAIAYGLDSGQEGVIAVYDLGGGTFDISVLRLSRGVFEVLATGGDSALGGDDFDHLLADYIREQAGIADRSDNRIQRQLLDAATQAKIELSDADVAQVNVAGWQGSITREQFNELIAPLVKRTLLSCRRALKDAGVEASDVLEVVMVGGSTRVPLVRERVGEFFGRTPLTSIDPDRVVAIGAAIQADILVGNKPDSEMLLLDVIPLSLGLETMGGLVEKVIPRNTTIPVARAQEFTTFKDGQTAMAIHVMQGERELVQDCRSLARFTLRGIPAMPAGGAHIRVTFQVDADGLLSVTAMEKSTGVEASIQVKPSYGLTDGEIASMIQDSMSFAEQDVQARMLAEQKVEAARVLESLDGALKSDGALLSAAERAAIDDAMAQLRAAAEGNDASAIEDAIKNTDKQTQEFAARRMDESIRQALKGHSVDEV.

The protein belongs to the heat shock protein 70 family.

Its function is as follows. Chaperone involved in the maturation of iron-sulfur cluster-containing proteins. Has a low intrinsic ATPase activity which is markedly stimulated by HscB. Involved in the maturation of IscU. This Cronobacter sakazakii (strain ATCC BAA-894) (Enterobacter sakazakii) protein is Chaperone protein HscA.